Reading from the N-terminus, the 304-residue chain is GTP cyclohydrolase FolE2 (304 aa).

Belongs to the GTP cyclohydrolase IV family.

The enzyme catalyses GTP + H2O = 7,8-dihydroneopterin 3'-triphosphate + formate + H(+). Its pathway is cofactor biosynthesis; 7,8-dihydroneopterin triphosphate biosynthesis; 7,8-dihydroneopterin triphosphate from GTP: step 1/1. Functionally, converts GTP to 7,8-dihydroneopterin triphosphate. The polypeptide is GTP cyclohydrolase FolE2 (Hahella chejuensis (strain KCTC 2396)).